The primary structure comprises 364 residues: Fructose-bisphosphate aldolase B (364 aa).

A2 is subject to N-acetylalanine. An N6-succinyllysine modification is found at K13. S36 carries the phosphoserine modification. T39 is modified (phosphothreonine). R43 lines the beta-D-fructose 1,6-bisphosphate pocket. The residue at position 89 (S89) is a Phosphoserine. At T119 the chain carries Phosphothreonine. Residue K121 is modified to N6-succinyllysine. Phosphoserine is present on S132. E188 functions as the Proton acceptor in the catalytic mechanism. The active-site Schiff-base intermediate with dihydroxyacetone-P is the K230. Phosphoserine occurs at positions 272, 276, 299, and 301. 272–274 (SGG) contacts beta-D-fructose 1,6-bisphosphate. R304 is a binding site for beta-D-fructose 1,6-bisphosphate. At S309 the chain carries Phosphoserine. An N6-succinyllysine modification is found at K317.

It belongs to the class I fructose-bisphosphate aldolase family. In terms of assembly, homotetramer. Interacts with BBS1, BBS2, BBS4 and BBS7. Forms a ternary complex with G6PD and TP53; this interaction is direct.

It is found in the cytoplasm. Its subcellular location is the cytosol. The protein localises to the cytoskeleton. The protein resides in the microtubule organizing center. It localises to the centrosome. It is found in the centriolar satellite. The catalysed reaction is beta-D-fructose 1,6-bisphosphate = D-glyceraldehyde 3-phosphate + dihydroxyacetone phosphate. It catalyses the reaction beta-D-fructose 1-phosphate = D-glyceraldehyde + dihydroxyacetone phosphate. It functions in the pathway carbohydrate degradation; glycolysis; D-glyceraldehyde 3-phosphate and glycerone phosphate from D-glucose: step 4/4. Its pathway is carbohydrate biosynthesis; gluconeogenesis. It participates in carbohydrate metabolism; fructose metabolism. Catalyzes the aldol cleavage of fructose 1,6-biphosphate to form two triosephosphates dihydroxyacetone phosphate and D-glyceraldehyde 3-phosphate in glycolysis as well as the reverse stereospecific aldol addition reaction in gluconeogenesis. In fructolysis, metabolizes fructose 1-phosphate derived from the phosphorylation of dietary fructose by fructokinase into dihydroxyacetone phosphate and D-glyceraldehyde. Acts as an adapter independently of its enzymatic activity, exerts a tumor suppressor role by stabilizing the ternary complex with G6PD and TP53 to inhibit G6PD activity and keep oxidative pentose phosphate metabolism in check. The chain is Fructose-bisphosphate aldolase B (Aldob) from Rattus norvegicus (Rat).